A 529-amino-acid polypeptide reads, in one-letter code: DnaJ homolog l(2)tid, mitochondrial (529 aa).

A mitochondrion-targeting transit peptide spans Met1–Tyr22. Position 35 is an omega-N-methylarginine (Arg35). The 66-residue stretch at Asp80–Gly145 folds into the J domain. Lys121 carries the N6-acetyllysine modification. The CR-type zinc finger occupies Gly230–Arg308. 8 residues coordinate Zn(2+): Cys243, Cys246, Cys260, Cys263, Cys282, Cys285, Cys296, and Cys299. A CXXCXGXG motif; approximate repeat occupies Cys243 to Lys250. The CXXCXGXG motif repeat unit spans residues Cys260 to Gly267. A CXXCXGXG motif; approximate repeat occupies Cys282–Arg289. Residues Cys296–Gly303 form a CXXCXGXG motif repeat. Positions Thr441–Asn529 are disordered. The segment covering Gln497–Gln508 has biased composition (basic and acidic residues).

The protein resides in the mitochondrion outer membrane. May act as a tumor suppressor in larval imaginal disks. The protein is DnaJ homolog l(2)tid, mitochondrial (l(2)tid) of Drosophila virilis (Fruit fly).